The following is a 210-amino-acid chain: MDDPSGFEERFVHRFYDENSREFSATRRRHWGMTRRFLDNYYTRESIVLDAGCGNGRSFLVPCMVGMDYCLGLLNDARAAGGQGLVRGDVLELPFVDCSFDLVLSVAVIHHLSTRCRRERAMKEMRRVLKDGGKMLLYVWGSSAKSKRKFSRAAGGSEQDYLATWNLRSDTKRYYHLYGMEGLLELCTDSGFKVLDHGTEEESLFAVLEK.

It belongs to the methyltransferase superfamily.

The protein is Putative methyltransferase ECU09_1500 of Encephalitozoon cuniculi (strain GB-M1) (Microsporidian parasite).